A 265-amino-acid chain; its full sequence is Protein Exd1 homolog (265 aa).

Positions 32-82 (EKQLDRIVLIYQVDTTYHSALKDIKDQKIISLLVEPSFYGRHHPTSILVVA) constitute a 3'-5' exonuclease domain.

It belongs to the EXD1 family. As to quaternary structure, homodimer.

RNA-binding protein. Inactive exonuclease. The sequence is that of Protein Exd1 homolog from Drosophila melanogaster (Fruit fly).